Here is a 502-residue protein sequence, read N- to C-terminus: ATP synthase subunit alpha (502 aa).

Glycine 169–threonine 176 lines the ATP pocket.

This sequence belongs to the ATPase alpha/beta chains family. As to quaternary structure, F-type ATPases have 2 components, CF(1) - the catalytic core - and CF(0) - the membrane proton channel. CF(1) has five subunits: alpha(3), beta(3), gamma(1), delta(1), epsilon(1). CF(0) has three main subunits: a(1), b(2) and c(9-12). The alpha and beta chains form an alternating ring which encloses part of the gamma chain. CF(1) is attached to CF(0) by a central stalk formed by the gamma and epsilon chains, while a peripheral stalk is formed by the delta and b chains.

It is found in the cell inner membrane. It carries out the reaction ATP + H2O + 4 H(+)(in) = ADP + phosphate + 5 H(+)(out). Functionally, produces ATP from ADP in the presence of a proton gradient across the membrane. The alpha chain is a regulatory subunit. In Solidesulfovibrio magneticus (strain ATCC 700980 / DSM 13731 / RS-1) (Desulfovibrio magneticus), this protein is ATP synthase subunit alpha.